Consider the following 727-residue polypeptide: Long-chain-fatty-acid--[acyl-carrier-protein] ligase AEE15, chloroplastic (727 aa).

A chloroplast-targeting transit peptide spans 1 to 66 (MQIRLKPDYS…PSFRRFRVHC (66 aa)).

This sequence belongs to the ATP-dependent AMP-binding enzyme family.

The protein localises to the plastid. It is found in the chloroplast. The enzyme catalyses a long-chain fatty acid + holo-[ACP] + ATP = a long-chain fatty acyl-[ACP] + AMP + diphosphate. Probably involved in the activation of fatty acids to acyl-carrier-protein prior to fatty acid elongation in plastids. Acts on medium- to long-chain fatty acids. The protein is Long-chain-fatty-acid--[acyl-carrier-protein] ligase AEE15, chloroplastic (AAE15) of Arabidopsis thaliana (Mouse-ear cress).